The chain runs to 394 residues: MAPKKQNGFMMFVNEWRNRNAEGRRMTLAEAVYHCGTIWEKMDTQQRGPYNSDAKDANAARRDKRGSLNGHGQVDKAQREAAESLMDKAQREAAESLMDMKRTTERLVLNAKMSHDLENAKFVFVAFNYFTKALTTDVYVPAEFAACEYSLKEGIRSIYSTMIDPGQIIFGQGSDALHNSSTTHDLPLPPNALGEKNMAKLYHNILDYLTKCQGEGKTPIVFTPAENIGMVKSCFRYLECEDDSRDGSGKIEVFDIQYLLFILKKEVMSVAGLNDEKINKFATDAFFKNDFFEFTAGIACQISSINTRDYHVATLIGLLPAQTINVYLGSTLRSMHEVLSDNDTKLTGYISFLFEVICGVALMFWVLQKARKELSETLLSADYNNEGKHPDVQV.

Positions 2-69 (APKKQNGFMM…ARRDKRGSLN (68 aa)) form a DNA-binding region, HMG box. Residues 44 to 93 (TQQRGPYNSDAKDANAARRDKRGSLNGHGQVDKAQREAAESLMDKAQREA) are disordered. Residues 73–93 (QVDKAQREAAESLMDKAQREA) are compositionally biased toward basic and acidic residues.

Belongs to the maelstrom family.

It localises to the cytoplasm. The protein localises to the nucleus. In terms of biological role, involved both in the piRNA and miRNA metabolic processes. As a component of the meiotic nuage, plays a central role during oogenesis by repressing transposable elements and preventing their mobilization, which is essential for the germline integrity. Repression of transposable elements is mediated via the piRNA metabolic process, which mediates the repression of transposable elements during meiosis by forming complexes composed of piRNAs and Piwi proteins and governs the repression of transposons. As a nuclear component, it is required for proper differentiation in the germline stem cell (GSC) lineage by repressing microRNA-7 (miR-7), thereby acting as an indirect regulator of bag-of-marbles (Bam). Acts by binding to the promoter of miR-7 gene and repressing its expression; miR-7 repression alleviates the Bam repression by miR-7, thereby allowing differentiation in the germline stem cell (GSC) lineage. The protein is Protein maelstrom (mael) of Drosophila sechellia (Fruit fly).